Consider the following 127-residue polypeptide: Large ribosomal subunit protein bL12c (127 aa).

Residues 104–127 are disordered; the sequence is GVAKDAAEEAKKQIEDAGGKASLK. Residues 105–121 show a composition bias toward basic and acidic residues; it reads VAKDAAEEAKKQIEDAG.

Belongs to the bacterial ribosomal protein bL12 family. Homodimer. Part of the ribosomal stalk of the 50S ribosomal subunit. Forms a multimeric L10(L12)X complex, where L10 forms an elongated spine to which 2 to 4 L12 dimers bind in a sequential fashion. Binds GTP-bound translation factors.

Its subcellular location is the plastid. It is found in the chloroplast. Functionally, forms part of the ribosomal stalk which helps the ribosome interact with GTP-bound translation factors. Is thus essential for accurate translation. This chain is Large ribosomal subunit protein bL12c, found in Trieres chinensis (Marine centric diatom).